The following is an 86-amino-acid chain: SEED MATURATION PROTEIN 1 (86 aa).

The disordered stretch occupies residues 52 to 86 (RIEKGKEQSAASGDQTQIQRDIKDIKGTRTDDSPR). The span at 60-70 (SAASGDQTQIQ) shows a compositional bias: polar residues. Over residues 71 to 86 (RDIKDIKGTRTDDSPR) the composition is skewed to basic and acidic residues.

The protein belongs to the LEA type 3 family.

In terms of biological role, protein chaperone involved in seed maturation and dormancy maintenance after high temperature fluctuation (e.g. secondary dormancy after 3 days at 40 degrees Celsius), probably by protecting heat labile proteins required for secondary dormancy (e.g. G6PDH, HOP3, SR45, ECP63, SCL33, RPL32B, ChlADR1, MSBP1, MBF1B, At3g01690, At1g15280, At1g15290, At2g31410, At1g11630, At1g65090, EMB2279, EMB1674 and RPL35C). This Arabidopsis thaliana (Mouse-ear cress) protein is SEED MATURATION PROTEIN 1.